Here is a 458-residue protein sequence, read N- to C-terminus: uncharacterized protein (458 aa).

It belongs to the glycerate kinase type-2 family.

This is an uncharacterized protein from Caenorhabditis elegans.